Consider the following 351-residue polypeptide: Cytochrome c biogenesis protein CcsA (351 aa).

A run of 8 helical transmembrane segments spans residues 12-32 (NISF…AAFP), 37-57 (LSIL…TLLG), 68-88 (ISNL…IHLI), 97-117 (LVGV…ALTL), 143-163 (MMLS…FLII), 259-279 (IIGL…VWAN), 294-314 (WALI…TKGW), and 320-340 (AILA…VNLL).

It belongs to the CcmF/CycK/Ccl1/NrfE/CcsA family. As to quaternary structure, may interact with ccs1.

Its subcellular location is the cellular thylakoid membrane. In terms of biological role, required during biogenesis of c-type cytochromes (cytochrome c6 and cytochrome f) at the step of heme attachment. The chain is Cytochrome c biogenesis protein CcsA from Trichodesmium erythraeum (strain IMS101).